The sequence spans 325 residues: Melanocortin receptor 5 (325 aa).

At 1–37 (MNSSFHLHFLDLGLNATEGNLSGLSVRNASSPCEDMG) the chain is on the extracellular side. Residues asparagine 2, asparagine 15, asparagine 20, and asparagine 28 are each glycosylated (N-linked (GlcNAc...) asparagine). Residues 38–61 (IAVEVFLALGLISLLENILVIGAI) form a helical membrane-spanning segment. Over 62-73 (VRNRNLHIPMYF) the chain is Cytoplasmic. Residues 74–97 (FVGSLAVADMLVSLSNFWETITIY) traverse the membrane as a helical segment. Residues 98–114 (LLTNKHLVMADASVRHL) lie on the Extracellular side of the membrane. The chain crosses the membrane as a helical span at residues 115 to 138 (DNVFDSMICISVVASMCSLLAIAV). At 139–155 (DRYVTIFCRLRYQRIMT) the chain is on the cytoplasmic side. The chain crosses the membrane as a helical span at residues 156–179 (GRRSGAIIAGIWAFCTSCGTVFIV). Residues 180–186 (YYESTYV) are Extracellular-facing. Residues 187–211 (VVCLIAMFLTMLLLMASLYTHMFLL) form a helical membrane-spanning segment. Residues 212–239 (ARTHVRRIAALPGHSSVRQRTGVKGAIT) are Cytoplasmic-facing. The helical transmembrane segment at 240-265 (LAMLLGVFIICWAPFFLHLILMISCP) threads the bilayer. At 266-273 (QNLYCSCF) the chain is on the extracellular side. The chain crosses the membrane as a helical span at residues 274–297 (MSHFNMYLILIMCNSVIDPLIYAF). Residues 298-325 (RSQEMRKTFKEIVCFQGFRTPCRFPSTY) lie on the Cytoplasmic side of the membrane. Cysteine 311 carries S-palmitoyl cysteine lipidation.

It belongs to the G-protein coupled receptor 1 family.

The protein resides in the cell membrane. Functionally, receptor for MSH (alpha, beta and gamma) and ACTH. The activity of this receptor is mediated by G proteins which activate adenylate cyclase. This receptor is a possible mediator of the immunomodulation properties of melanocortins. The chain is Melanocortin receptor 5 (MC5R) from Ovis aries (Sheep).